A 268-amino-acid chain; its full sequence is Tryptophan synthase alpha chain (268 aa).

Residues Glu49 and Asp60 each act as proton acceptor in the active site.

It belongs to the TrpA family. In terms of assembly, tetramer of two alpha and two beta chains.

It carries out the reaction (1S,2R)-1-C-(indol-3-yl)glycerol 3-phosphate + L-serine = D-glyceraldehyde 3-phosphate + L-tryptophan + H2O. Its pathway is amino-acid biosynthesis; L-tryptophan biosynthesis; L-tryptophan from chorismate: step 5/5. Functionally, the alpha subunit is responsible for the aldol cleavage of indoleglycerol phosphate to indole and glyceraldehyde 3-phosphate. The polypeptide is Tryptophan synthase alpha chain (Yersinia enterocolitica serotype O:8 / biotype 1B (strain NCTC 13174 / 8081)).